We begin with the raw amino-acid sequence, 88 residues long: MARVTVQDAVEKIGNRFDLILTAARRARQLQLNQSAPLVPEDNDKPTVIALREIEKGLINQDIMDAQEFQKMAKVQETEEAAVALITE.

This sequence belongs to the RNA polymerase subunit omega family. The RNAP catalytic core consists of 2 alpha, 1 beta, 1 beta' and 1 omega subunit. When a sigma factor is associated with the core the holoenzyme is formed, which can initiate transcription.

The enzyme catalyses RNA(n) + a ribonucleoside 5'-triphosphate = RNA(n+1) + diphosphate. Functionally, promotes RNA polymerase assembly. Latches the N- and C-terminal regions of the beta' subunit thereby facilitating its interaction with the beta and alpha subunits. The sequence is that of DNA-directed RNA polymerase subunit omega from Haemophilus influenzae (strain 86-028NP).